The chain runs to 325 residues: E3 ubiquitin-protein ligase SIAH2 (325 aa).

The span at methionine 1–cysteine 15 shows a compositional bias: polar residues. The tract at residues methionine 1–glycine 43 is disordered. Serine 6 is subject to Phosphoserine. A Phosphoserine; by DYRK2 modification is found at serine 16. Residues lysine 17–proline 33 show a composition bias toward pro residues. Threonine 24 is modified (phosphothreonine; by MAPK14). Serine 29 is modified (phosphoserine; by DYRK2 and MAPK14). Low complexity predominate over residues proline 34–glycine 43. Position 69 is a phosphoserine; by DYRK2 (serine 69). Residues cysteine 81–arginine 116 form an RING-type zinc finger. Threonine 120 is modified (phosphothreonine; by DYRK2). The tract at residues valine 131–cysteine 323 is SBD. Residues alanine 134–lysine 194 form an SIAH-type zinc finger. The Zn(2+) site is built by cysteine 139, cysteine 146, histidine 158, cysteine 162, cysteine 169, cysteine 176, histidine 188, and histidine 193.

It belongs to the SINA (Seven in absentia) family. In terms of assembly, homodimer. Interacts with UBE2E2. Interacts with VAV1, without mediating its ubiquitin-mediated degradation. Interacts with CACYBP/SIP. Probable component of some large E3 complex possibly composed of UBE2D1, SIAH2, CACYBP/SIP, SKP1, APC and TBL1X. Interacts with UBE2I. Interacts with PEG10, which may inhibit its activity. Interacts with EGLN2 and SNCAIP. Interacts with DYRK2. Interacts with PEG3. Interacts with NR1D1 and NR1D2. Interacts with DCC. Interacts with AXIN1. Phosphorylated at Ser-29 by DYRK2; this increases the ubiquitin ligase activity and promotes degradation of EGLN3. Phosphorylated at Thr-24 and Ser-29 by MAPK14, which mediates the degradation by the proteasome of EGLN3. As to expression, widely expressed at low level in embryos and adults. Expressed in a specific population of germ cells within both the mouse ovary and testis. Absent in primordial oocytes but expressed in all growing oocytes, coincident with their recruitment from the pool of quiescent cells. Its level of expression increases as the oocytes mature. Expressed in Graafian follicles and in fertilized zygotes up until the two cell stage, a time of extensive maternal transcript degradation and zygotic gene activation. Expressed in the testis from postmeiotic spermatids.

The protein localises to the cytoplasm. It is found in the nucleus. It catalyses the reaction S-ubiquitinyl-[E2 ubiquitin-conjugating enzyme]-L-cysteine + [acceptor protein]-L-lysine = [E2 ubiquitin-conjugating enzyme]-L-cysteine + N(6)-ubiquitinyl-[acceptor protein]-L-lysine.. The protein operates within protein modification; protein ubiquitination. E3 ubiquitin-protein ligase that mediates ubiquitination and subsequent proteasomal degradation of target proteins. E3 ubiquitin ligases accept ubiquitin from an E2 ubiquitin-conjugating enzyme in the form of a thioester and then directly transfers the ubiquitin to targeted substrates. Mediates E3 ubiquitin ligase activity either through direct binding to substrates or by functioning as the essential RING domain subunit of larger E3 complexes. Mediates ubiquitination and proteasomal degradation of DYRK2 in response to hypoxia. Promotes monoubiquitination of SNCA. Triggers the ubiquitin-mediated degradation of many substrates, including proteins involved in transcription regulation (GPS2, POU2AF1, PML, NCOR1), a cell surface receptor (DCC), an antiapoptotic protein (BAG1), and a protein involved in synaptic vesicle function in neurons (SYP). It is thereby involved in apoptosis, tumor suppression, cell cycle, transcription and signaling processes. Has some overlapping function with SIAH1. Triggers the ubiquitin-mediated degradation of TRAF2, whereas SIAH1 does not. Regulates cellular clock function via ubiquitination of the circadian transcriptional repressors NR1D1 and NR1D2 leading to their proteasomal degradation. Plays an important role in mediating the rhythmic degradation/clearance of NR1D1 and NR1D2 contributing to their circadian profile of protein abundance. Mediates ubiquitination and degradation of EGLN2 and EGLN3 in response to the unfolded protein response (UPR), leading to their degradation and subsequent stabilization of ATF4. Also part of the Wnt signaling pathway in which it mediates the Wnt-induced ubiquitin-mediated proteasomal degradation of AXIN1. The polypeptide is E3 ubiquitin-protein ligase SIAH2 (Siah2) (Mus musculus (Mouse)).